Here is a 367-residue protein sequence, read N- to C-terminus: Nociceptin receptor (367 aa).

Residues 1–45 (MESLFPAPFWEVLYGSHFQGNLSLLNETVPHHLLLNASHSAFLPL) lie on the Extracellular side of the membrane. Residues Asn-21, Asn-26, and Asn-36 are each glycosylated (N-linked (GlcNAc...) asparagine). The chain crosses the membrane as a helical span at residues 46-71 (GLKVTIVGLYLAVCIGGLLGNCLVMY). At 72-84 (VILRHTKMKTATN) the chain is on the cytoplasmic side. Residues 85–106 (IYIFNLALADTLVLLTLPFQGT) traverse the membrane as a helical segment. The Extracellular segment spans residues 107-121 (DILLGFWPFGNALCK). A disulfide bridge connects residues Cys-120 and Cys-197. A helical transmembrane segment spans residues 122–143 (TVIAIDYYNMFTSTFTLTAMSV). Over 144 to 162 (DRYVAICHPIRALDVRTSS) the chain is Cytoplasmic. A helical transmembrane segment spans residues 163 to 185 (KAQAVNVAIWALASVVGVPVAIM). Residues 186 to 208 (GSAQVEDEEIECLVEIPAPQDYW) are Extracellular-facing. A helical membrane pass occupies residues 209–233 (GPVFAICIFLFSFIIPVLIISVCYS). The Cytoplasmic portion of the chain corresponds to 234–261 (LMIRRLRGVRLLSGSREKDRNLRRITRL). The chain crosses the membrane as a helical span at residues 262 to 282 (VLVVVAVFVGCWTPVQVFVLV). Residues 283–297 (QGLGVQPGSETAVAI) lie on the Extracellular side of the membrane. Residues 298-319 (LRFCTALGYVNSCLNPILYAFL) traverse the membrane as a helical segment. Topologically, residues 320-367 (DENFKACFRKFCCASALHREMQVSDRVRSIAKDVGLGCKTSETVPRPA) are cytoplasmic. The S-palmitoyl cysteine moiety is linked to residue Cys-331.

The protein belongs to the G-protein coupled receptor 1 family. Phosphorylation at Ser-360 requires GRK3. In the brain, isoform KOR3 and isoform KOR3C are most abundant in hypothalamus and periaqueductal gray. Isoform KOR3A is highly expressed in cortex, striatum and brainstem. Isoform KOR3D is highly expressed in cerebellum, hypothalamus and brainstem. Detected in spleen lymphocytes.

Its subcellular location is the cell membrane. It is found in the cytoplasmic vesicle. G-protein coupled opioid receptor that functions as a receptor for the endogenous neuropeptide nociceptin. Ligand binding causes a conformation change that triggers signaling via guanine nucleotide-binding proteins (G proteins) and modulates the activity of down-stream effectors. Signaling via G proteins mediates inhibition of adenylate cyclase activity and calcium channel activity. Arrestins modulate signaling via G proteins and mediate the activation of alternative signaling pathways that lead to the activation of MAP kinases. Plays a role in modulating nociception and the perception of pain. Plays a role in the regulation of locomotor activity by the neuropeptide nociceptin. The sequence is that of Nociceptin receptor (Oprl1) from Mus musculus (Mouse).